Reading from the N-terminus, the 196-residue chain is Molybdenum cofactor guanylyltransferase (196 aa).

GTP-binding positions include 10-12 (LAG), Lys23, Asn51, Asp69, and Asp99. Asp99 is a binding site for Mg(2+).

Belongs to the MobA family. As to quaternary structure, monomer. Mg(2+) is required as a cofactor.

It localises to the cytoplasm. The catalysed reaction is Mo-molybdopterin + GTP + H(+) = Mo-molybdopterin guanine dinucleotide + diphosphate. Its function is as follows. Transfers a GMP moiety from GTP to Mo-molybdopterin (Mo-MPT) cofactor (Moco or molybdenum cofactor) to form Mo-molybdopterin guanine dinucleotide (Mo-MGD) cofactor. The protein is Molybdenum cofactor guanylyltransferase of Shewanella woodyi (strain ATCC 51908 / MS32).